We begin with the raw amino-acid sequence, 438 residues long: Serine/threonine exchanger SteT (438 aa).

Topologically, residues 1–11 are cytoplasmic; sequence MHTEDNGLKKE. A helical membrane pass occupies residues 12-32; it reads IGLLFALTLVIGTIIGSGVFM. Topologically, residues 33–45 are extracellular; sequence KPGAVLAYSGDSK. The helical transmembrane segment at 46 to 66 threads the bilayer; the sequence is MALFAWLLGGILTLAGGLTIA. The Cytoplasmic portion of the chain corresponds to 67–98; sequence EIGTQIPKTGGLYTYLEEVYGEFWGFLCGWVQ. Residues 99–119 form a helical membrane-spanning segment; sequence IIIYGPAIIGALGLYFGSLMA. Residues 120-126 are Extracellular-facing; that stretch reads NLFGWGS. The helical transmembrane segment at 127 to 147 threads the bilayer; the sequence is GLSKVIGIIAVLFLCVINIIG. The Cytoplasmic portion of the chain corresponds to 148–151; it reads TKYG. A helical membrane pass occupies residues 152–172; sequence GFVQTLTTIGKLIPIACIIVF. Residues 173 to 193 are Extracellular-facing; the sequence is GLWKGDQHIFTAVNESISDMN. A helical membrane pass occupies residues 194–214; that stretch reads FGAAILATLFAYDGWILLAAL. Topologically, residues 215-230 are cytoplasmic; sequence GGEMKNPEKLLPRAMT. The chain crosses the membrane as a helical span at residues 231 to 251; the sequence is GGLLIVTAIYIFINFALLHIL. At 252–269 the chain is on the extracellular side; sequence SANEIVTLGENATSTAAT. The chain crosses the membrane as a helical span at residues 270–290; the sequence is MLFGSIGGKLISVGIIVSIFG. The Cytoplasmic segment spans residues 291–327; the sequence is CLNGKVLSFPRVSFAMAERKQLPFAEKLSHVHPSFRT. The chain crosses the membrane as a helical span at residues 328–348; it reads PWIAISFQIALALIMMLISNP. At 349–352 the chain is on the extracellular side; it reads DKLS. Residues 353 to 373 form a helical membrane-spanning segment; that stretch reads EISIFMIYIFYVMAFFAVFIL. The Cytoplasmic portion of the chain corresponds to 374 to 388; that stretch reads RKRAKGEKRAYSVPL. Residues 389–409 traverse the membrane as a helical segment; sequence YPFMPILAIAGSFFVLGSTLI. The Extracellular segment spans residues 410-411; sequence TD. Residues 412 to 432 form a helical membrane-spanning segment; sequence TMSCGLSILIGLAGLPVYYGM. Residues 433 to 438 are Cytoplasmic-facing; sequence KKRKAS.

The protein belongs to the amino acid-polyamine-organocation (APC) superfamily. L-type amino acid transporter (LAT) (TC 2.A.3.8) family. As to quaternary structure, monomer.

It localises to the cell membrane. In terms of biological role, exhibits an obligate exchange activity for serine, threonine and aromatic amino acids. The polypeptide is Serine/threonine exchanger SteT (steT) (Bacillus subtilis (strain 168)).